Reading from the N-terminus, the 60-residue chain is uncharacterized protein (60 aa).

This is an uncharacterized protein from Thermotoga maritima (strain ATCC 43589 / DSM 3109 / JCM 10099 / NBRC 100826 / MSB8).